Consider the following 104-residue polypeptide: MAAKIRRNDEVIVLVGKDKGKKGKVTKVLETGKVIVEGINLVKKHQKPVPALGQQGGIVEKEAAIDASNIAIYNEATGKADRIGFRFEEGKKVRFFKSNGETIK.

Belongs to the universal ribosomal protein uL24 family. In terms of assembly, part of the 50S ribosomal subunit.

In terms of biological role, one of two assembly initiator proteins, it binds directly to the 5'-end of the 23S rRNA, where it nucleates assembly of the 50S subunit. Functionally, one of the proteins that surrounds the polypeptide exit tunnel on the outside of the subunit. The sequence is that of Large ribosomal subunit protein uL24 from Aliivibrio fischeri (strain ATCC 700601 / ES114) (Vibrio fischeri).